Consider the following 317-residue polypeptide: Porphobilinogen deaminase (317 aa).

An S-(dipyrrolylmethanemethyl)cysteine modification is found at Cys245.

The protein belongs to the HMBS family. As to quaternary structure, monomer. Dipyrromethane serves as cofactor.

It carries out the reaction 4 porphobilinogen + H2O = hydroxymethylbilane + 4 NH4(+). The protein operates within porphyrin-containing compound metabolism; protoporphyrin-IX biosynthesis; coproporphyrinogen-III from 5-aminolevulinate: step 2/4. Its pathway is porphyrin-containing compound metabolism; chlorophyll biosynthesis. Functionally, tetrapolymerization of the monopyrrole PBG into the hydroxymethylbilane pre-uroporphyrinogen in several discrete steps. This Synechococcus sp. (strain CC9605) protein is Porphobilinogen deaminase.